A 658-amino-acid chain; its full sequence is Serine/threonine-protein kinase shk1/pak1 (658 aa).

Disordered regions lie at residues 1 to 21, 39 to 104, 126 to 147, and 213 to 365; these read MERGTLQPRKKAPNGYGITPI, RKLK…SYDE, GGSSPTSSYGSGSASPRKSTVI, and GAKP…QQSN. The segment covering 66 to 98 has biased composition (polar residues); it reads PLSQSRTTVSRVSLGSRQHSSSSIRKLQTNVSD. The span at 129 to 140 shows a compositional bias: low complexity; the sequence is SPTSSYGSGSAS. Residues 147 to 160 enclose the CRIB domain; sequence ISSPFDPKHVTHVG. 2 stretches are compositionally biased toward low complexity: residues 226-254 and 262-272; these read PLLSVSALSSSSHLQPTSATSSSSRLYPS and ASSSSSPLLSS. Over residues 273–300 the composition is skewed to polar residues; the sequence is QTVKTTTSNASRQPSPLVSSKSTDNIIR. A phosphoserine mark is found at S301 and S303. A Protein kinase domain is found at 386 to 637; it reads YRNFVKIGQG…SGELLRHPFL (252 aa). Residues 392-400 and K415 each bind ATP; that span reads IGQGASGDV. Residue D505 is the Proton acceptor of the active site.

It belongs to the protein kinase superfamily. STE Ser/Thr protein kinase family. STE20 subfamily. In terms of assembly, forms an activated complex with GTP-bound ras-like cdc42. Interacts with skb1 and the SH3 domain of skb5 via its amino-terminal regulatory domain. Skb1, cdc42 and shk1 are able to form a ternary complex in vivo. Interacts with rga8 and may interact with byr2. Autophosphorylated on serine residues.

The protein resides in the cytoplasm. The protein localises to the cytoskeleton. It localises to the spindle. It carries out the reaction L-seryl-[protein] + ATP = O-phospho-L-seryl-[protein] + ADP + H(+). The enzyme catalyses L-threonyl-[protein] + ATP = O-phospho-L-threonyl-[protein] + ADP + H(+). Functionally, MAP4K component of the MAPK pathway required for the mating pheromone response. Phosphorylates histone H2B to form H2BS10ph. Phosphorylates tea1. Required for skb1-dependent mitotic inhibitory function. Regulates microtubule dynamics and cell polarity. In Schizosaccharomyces pombe (strain 972 / ATCC 24843) (Fission yeast), this protein is Serine/threonine-protein kinase shk1/pak1 (shk1).